A 160-amino-acid chain; its full sequence is Secreted RxLR effector protein RXLR-C11 (160 aa).

The signal sequence occupies residues 1 to 19 (MHFSLVLLVFAAIVIPICA). The RxLR-dEER signature appears at 58 to 75 (RLLRMNDKAVISDHEEER).

It belongs to the RxLR effector family.

Its subcellular location is the secreted. The protein localises to the host cell membrane. It localises to the host nucleus. Secreted effector that suppresses pattern-triggered immunity (PTI) in plant host. In Plasmopara halstedii (Downy mildew of sunflower), this protein is Secreted RxLR effector protein RXLR-C11.